The chain runs to 364 residues: MTQRWGPQRLAGGQPQAGLEESTQASIFTYTNSNATRDPFEGPNYHIAPRWVYHLTSAWMIFVVIASVFTNGLVLVATMRFKKLRHPLNWILVNLAIADLAETIIASTISVVNQIYGYFVLGHPLCVVEGYTVSLCGITGLWSLAIISWERWLVVCKPFGNVRFDAKLAIAGIAFSWIWAAVWTAPPIFGWSRYWPHGLKTSCGPDVFSGSSYPGVQSYMIVLMTTCCIIPLSVIILCYLQVWLAIRAVAKQQKESESTQKAEKEVTRMVVVMVLAYCLCWGPYTFFACFAAAHPGYAFHPLVAALPAYFAKSATIYNPIIYVFMNRQFRNCILQLFGKKVDDSSELSSASRTEASSVSSVSPA.

At 1 to 58 (MTQRWGPQRLAGGQPQAGLEESTQASIFTYTNSNATRDPFEGPNYHIAPRWVYHLTSA) the chain is on the extracellular side. Ser-22 is a glycosylation site (O-linked (GlcNAc) serine). Asn-34 carries an N-linked (GlcNAc...) asparagine glycan. A helical transmembrane segment spans residues 59-79 (WMIFVVIASVFTNGLVLVATM). At 80–90 (RFKKLRHPLNW) the chain is on the cytoplasmic side. The chain crosses the membrane as a helical span at residues 91–111 (ILVNLAIADLAETIIASTISV). The Extracellular portion of the chain corresponds to 112 to 126 (VNQIYGYFVLGHPLC). Residues Cys-126 and Cys-203 are joined by a disulfide bond. The helical transmembrane segment at 127-147 (VVEGYTVSLCGITGLWSLAII) threads the bilayer. Topologically, residues 148 to 168 (SWERWLVVCKPFGNVRFDAKL) are cytoplasmic. A helical transmembrane segment spans residues 169 to 189 (AIAGIAFSWIWAAVWTAPPIF). The Extracellular segment spans residues 190–219 (GWSRYWPHGLKTSCGPDVFSGSSYPGVQSY). Residues 220-240 (MIVLMTTCCIIPLSVIILCYL) form a helical membrane-spanning segment. At 241 to 269 (QVWLAIRAVAKQQKESESTQKAEKEVTRM) the chain is on the cytoplasmic side. Residues 270–290 (VVVMVLAYCLCWGPYTFFACF) traverse the membrane as a helical segment. Residues 291–301 (AAAHPGYAFHP) lie on the Extracellular side of the membrane. Residues 302–324 (LVAALPAYFAKSATIYNPIIYVF) form a helical membrane-spanning segment. Lys-312 is modified (N6-(retinylidene)lysine). The Cytoplasmic portion of the chain corresponds to 325 to 364 (MNRQFRNCILQLFGKKVDDSSELSSASRTEASSVSSVSPA).

The protein belongs to the G-protein coupled receptor 1 family. Opsin subfamily. Phosphorylated on some or all of the serine and threonine residues present in the C-terminal region. As to expression, the three color pigments are found in the cone photoreceptor cells.

Its subcellular location is the membrane. Functionally, visual pigments are the light-absorbing molecules that mediate vision. They consist of an apoprotein, opsin, covalently linked to cis-retinal. The protein is Long-wave-sensitive opsin 1 (OPN1LW) of Canis lupus familiaris (Dog).